Reading from the N-terminus, the 117-residue chain is DNA-directed RNA polymerase subunit omega (117 aa).

The segment covering 96 to 105 (KEEAEEEAKQ) has biased composition (basic and acidic residues). A disordered region spans residues 96–117 (KEEAEEEAKQKNSRAAKAAAAE). Low complexity predominate over residues 108-117 (SRAAKAAAAE).

Belongs to the RNA polymerase subunit omega family. As to quaternary structure, the RNAP catalytic core consists of 2 alpha, 1 beta, 1 beta' and 1 omega subunit. When a sigma factor is associated with the core the holoenzyme is formed, which can initiate transcription.

The enzyme catalyses RNA(n) + a ribonucleoside 5'-triphosphate = RNA(n+1) + diphosphate. Promotes RNA polymerase assembly. Latches the N- and C-terminal regions of the beta' subunit thereby facilitating its interaction with the beta and alpha subunits. The polypeptide is DNA-directed RNA polymerase subunit omega (Lactococcus lactis subsp. cremoris (strain MG1363)).